The primary structure comprises 511 residues: Mediator of RNA polymerase II transcription subunit 17 (511 aa).

The protein belongs to the Mediator complex subunit 17 family. As to quaternary structure, component of the Mediator complex.

It is found in the nucleus. Functionally, component of the Mediator complex, a coactivator involved in the regulated transcription of nearly all RNA polymerase II-dependent genes. Mediator functions as a bridge to convey information from gene-specific regulatory proteins to the basal RNA polymerase II transcription machinery. Mediator is recruited to promoters by direct interactions with regulatory proteins and serves as a scaffold for the assembly of a functional preinitiation complex with RNA polymerase II and the general transcription factors. The chain is Mediator of RNA polymerase II transcription subunit 17 (SRB4) from Yarrowia lipolytica (strain CLIB 122 / E 150) (Yeast).